Consider the following 304-residue polypeptide: Rhodopsin (304 aa).

Topologically, residues 1–13 (YEYPQYYLVNPAA) are extracellular. Residues 14-38 (YAALGAYMFLLILVGFPINFLTLYV) form a helical membrane-spanning segment. Over 39–50 (TIEHKKLRTPLN) the chain is Cytoplasmic. Residues 51–73 (YILLNLAVANLFMVFGGFTTTMF) traverse the membrane as a helical segment. Topologically, residues 74-87 (TSIRGYFVLGHLGC) are extracellular. A disulfide bond links cysteine 87 and cysteine 164. A helical transmembrane segment spans residues 88 to 110 (NLEGFFATLSGEIALWSLVVLAI). Residues 111-113 (ERW) carry the 'Ionic lock' involved in activated form stabilization motif. Residues 111–129 (ERWVVVCKPISNFRFGENH) lie on the Cytoplasmic side of the membrane. The chain crosses the membrane as a helical span at residues 130-150 (AIMGLAFTWTMAMACAAPPLV). Residues 151 to 179 (GWSRYIPEGMQCSCGIDYYTRAEGFNNES) are Extracellular-facing. N-linked (GlcNAc...) asparagine glycosylation occurs at asparagine 177. The chain crosses the membrane as a helical span at residues 180–201 (FVVYMFTCHFMTPLTIVFFCYG). At 202-229 (RLLCAVKEAAAAQQESETTQRAEREVTR) the chain is on the cytoplasmic side. The chain crosses the membrane as a helical span at residues 230–251 (MVVIMVIAFLICWCPYAGVAWF). Over 252-263 (IFTHQGSEFGPV) the chain is Extracellular. A helical membrane pass occupies residues 264 to 285 (FMTIPAFFAKSSSIYNPMIYIC). Residue lysine 273 is modified to N6-(retinylidene)lysine. Over 286-304 (LNKQFRHCMITTLCCGKKA) the chain is Cytoplasmic. Residues cysteine 299 and cysteine 300 are each lipidated (S-palmitoyl cysteine).

It belongs to the G-protein coupled receptor 1 family. Opsin subfamily. Phosphorylated on some or all of the serine and threonine residues present in the C-terminal region. In terms of processing, contains one covalently linked retinal chromophore.

It localises to the membrane. It is found in the cell projection. The protein resides in the cilium. Its subcellular location is the photoreceptor outer segment. In terms of biological role, photoreceptor required for image-forming vision at low light intensity. While most salt water fish species use retinal as chromophore, most freshwater fish use 3-dehydroretinal, or a mixture of retinal and 3-dehydroretinal. Light-induced isomerization of 11-cis to all-trans retinal triggers a conformational change that activates signaling via G-proteins. Subsequent receptor phosphorylation mediates displacement of the bound G-protein alpha subunit by arrestin and terminates signaling. The protein is Rhodopsin (rho) of Ictalurus punctatus (Channel catfish).